Consider the following 1711-residue polypeptide: Serine/threonine-protein kinase MRCK beta (1711 aa).

The region spanning 76–342 is the Protein kinase domain; the sequence is FEIIKVIGRG…IEDFKKHAFF (267 aa). Residues 82 to 90 and K105 contribute to the ATP site; that span reads IGRGAFGEV. D200 serves as the catalytic Proton acceptor. A phosphoserine; by autocatalysis mark is found at S221 and S233. A Phosphothreonine; by autocatalysis modification is found at T239. Positions 343-413 constitute an AGC-kinase C-terminal domain; that stretch reads EGLNWENIRN…TTESCFSDRG (71 aa). T423 is modified (phosphothreonine). Coiled-coil stretches lie at residues 431–815 and 878–939; these read QRDL…AHWE and ELQS…FRAD. Positions 461 to 484 are disordered; it reads LQESTQTVQSLHGSSRALSNSNRD. Polar residues predominate over residues 463-481; that stretch reads ESTQTVQSLHGSSRALSNS. R671 bears the Omega-N-methylarginine mark. Y954 carries the post-translational modification Phosphotyrosine. Positions 969–1009 are disordered; sequence SSASEQETQAPKPEASPSMSVAASEQQEDMARPPQRPSAVP. The segment at 1025–1075 adopts a Phorbol-ester/DAG-type zinc-finger fold; that stretch reads AHQFSIKSFSSPTQCSHCTSLMVGLIRQGYACEVCSFACHVSCKDGAPQVC. Positions 1095 to 1214 constitute a PH domain; it reads GTAYKGHVKV…WVGILEGLQS (120 aa). The CNH domain occupies 1240 to 1513; that stretch reads IKAILTAAIV…RPLNSEGTLN (274 aa). The region spanning 1583 to 1596 is the CRIB domain; sequence ISNPTNFNHVAHMG. The disordered stretch occupies residues 1611–1711; that stretch reads AVPPSQEERP…EGLEQPACDT (101 aa). Residues 1641 to 1650 show a composition bias toward polar residues; sequence WPSSGGSEPS. Residues 1664–1675 show a composition bias toward basic and acidic residues; the sequence is DFDKEPDSDSTK. Residues S1680, S1682, S1686, S1690, and S1693 each carry the phosphoserine modification.

It belongs to the protein kinase superfamily. AGC Ser/Thr protein kinase family. DMPK subfamily. As to quaternary structure, homodimer and homotetramer via the coiled coil regions. Interacts tightly with GTP-bound but not GDP-bound CDC42. Interacts with TJP1, when in the presence of catalytically active CDC42. Forms a tripartite complex with MYO18A and LURAP1 with the latter acting as an adapter connecting CDC42BPB and MYO18A. LURAP1 binding results in activation of CDC42BPB by abolition of its negative autoregulation. Interacts with STRIP1, STRN3 and SIKE1. Interacts with CPNE4 (via VWFA domain). Interacts with LURAP1. Interacts (via AGC-kinase C-terminal domain) with FAM89B/LRAP25 (via LRR repeat). Forms a tripartite complex with FAM89B/LRAP25 and LIMK1. The cofactor is Mg(2+). Proteolytically cleaved by caspases upon apoptosis induction. As to expression, expressed in all tissues examined, with high levels in heart, brain, placenta and lung.

It localises to the cytoplasm. The protein resides in the cell membrane. Its subcellular location is the cell junction. It is found in the cell projection. The protein localises to the lamellipodium. The enzyme catalyses L-seryl-[protein] + ATP = O-phospho-L-seryl-[protein] + ADP + H(+). It carries out the reaction L-threonyl-[protein] + ATP = O-phospho-L-threonyl-[protein] + ADP + H(+). Maintained in an inactive, closed conformation by an interaction between the kinase domain and the negative autoregulatory C-terminal coiled-coil region. Agonist binding to the phorbol ester binding site disrupts this, releasing the kinase domain to allow N-terminus-mediated dimerization and kinase activation by transautophosphorylation. Inhibited by chelerythrine chloride. Serine/threonine-protein kinase which is an important downstream effector of CDC42 and plays a role in the regulation of cytoskeleton reorganization and cell migration. Regulates actin cytoskeletal reorganization via phosphorylation of PPP1R12C and MYL9/MLC2. In concert with MYO18A and LURAP1, is involved in modulating lamellar actomyosin retrograde flow that is crucial to cell protrusion and migration. Phosphorylates PPP1R12A. In concert with FAM89B/LRAP25 mediates the targeting of LIMK1 to the lamellipodium resulting in its activation and subsequent phosphorylation of CFL1 which is important for lamellipodial F-actin regulation. In Homo sapiens (Human), this protein is Serine/threonine-protein kinase MRCK beta.